A 398-amino-acid polypeptide reads, in one-letter code: Dual-specificity RNA methyltransferase RlmN (398 aa).

The active-site Proton acceptor is E119. In terms of domain architecture, Radical SAM core spans 125-364; it reads EEERATLCVS…TIVRKTRGDD (240 aa). A disulfide bridge connects residues C132 and C369. Residues C139, C143, and C146 each contribute to the [4Fe-4S] cluster site. Residues 193–194, S225, 247–249, and N326 contribute to the S-adenosyl-L-methionine site; these read GE and SLH. The active-site S-methylcysteine intermediate is C369.

It belongs to the radical SAM superfamily. RlmN family. Requires [4Fe-4S] cluster as cofactor.

The protein localises to the cytoplasm. The catalysed reaction is adenosine(2503) in 23S rRNA + 2 reduced [2Fe-2S]-[ferredoxin] + 2 S-adenosyl-L-methionine = 2-methyladenosine(2503) in 23S rRNA + 5'-deoxyadenosine + L-methionine + 2 oxidized [2Fe-2S]-[ferredoxin] + S-adenosyl-L-homocysteine. It catalyses the reaction adenosine(37) in tRNA + 2 reduced [2Fe-2S]-[ferredoxin] + 2 S-adenosyl-L-methionine = 2-methyladenosine(37) in tRNA + 5'-deoxyadenosine + L-methionine + 2 oxidized [2Fe-2S]-[ferredoxin] + S-adenosyl-L-homocysteine. Functionally, specifically methylates position 2 of adenine 2503 in 23S rRNA and position 2 of adenine 37 in tRNAs. m2A2503 modification seems to play a crucial role in the proofreading step occurring at the peptidyl transferase center and thus would serve to optimize ribosomal fidelity. The polypeptide is Dual-specificity RNA methyltransferase RlmN (Pectobacterium atrosepticum (strain SCRI 1043 / ATCC BAA-672) (Erwinia carotovora subsp. atroseptica)).